A 516-amino-acid polypeptide reads, in one-letter code: Multicopper oxidase CueO (516 aa).

Residues 1–28 (MQRRDFLKYSVALGVASALPLWSRAVFA) constitute a signal peptide (tat-type signal). 2 consecutive Plastocyanin-like domains span residues 55-165 (GQST…IEDD) and 227-292 (PRGW…DNKP). Residues His101, His103, His141, and His143 each coordinate Cu cation. Residues 355–400 (MDPMLDMMGMQMLMEKYGDQAMAGMDHSQMMGHMGHGNMNHMNHGG) form a methionine-rich region region. Residues 402-516 (FDFHHANKIN…DTGMMLGFTV (115 aa)) form the Plastocyanin-like 3 domain. Residues His443, His446, His448, His499, Cys500, His501, and His505 each coordinate Cu cation.

The protein belongs to the multicopper oxidase family. Monomer. Requires Cu cation as cofactor. Exported by the Tat system. The position of the signal peptide cleavage has been experimentally proven.

The protein localises to the periplasm. It catalyses the reaction 4 Cu(+) + O2 + 4 H(+) = 4 Cu(2+) + 2 H2O. With respect to regulation, ferroxidase and phenoloxidase activities are enhanced considerably in the presence of excess copper ions. A labile regulatory copper ion near the T1 copper site is important for the copper associated activation of enzyme activity. Ag(+) acts as a potent inhibitor of oxidase activity by binding at Cu(+) binding sites, blocking Cu(+) substrate binding and oxidation. pPD oxidase activity is strongly inhibited by sodium azide, an inhibitor of the electron transfer. Its function is as follows. Multicopper oxidase involved in copper homeostasis and copper tolerance under aerobic conditions. Is responsible for the oxidation of Cu(+) to the less harmful Cu(2+) in the periplasm, thereby preventing Cu(+) from entering the cytoplasm. Probably primarily functions as a cuprous oxidase in vivo. In terms of biological role, in vitro, in the presence of excess copper ions, exhibits ferroxidase and phenoloxidase activities. Fe(2+) is an excellent substrate in the presence of excess Cu(2+), but is inactive in the absence of Cu(2+). Oxidizes the phenolate iron siderophores enterobactin, 2,3-dihydroxybenzoate (2,3-DHB) and 3-hydroxyanthranilate (3-HAA). Oxidation and thus inactivation of enterobactin could protect cells from the interaction of enterobactin with copper and play a central role as an interface between copper detoxification and iron homeostasis. Also oxidizes a variety of phenolic model substrates, including 2,2'-azinobis(3-ethylbenzthiazolinesulfonic acid) (ABTS), p-phenylenediamine (pPD), 2,6-dimethoxyphenol (2,6-DMP) and 3,4-dihydroxybenzoic acid (3,4-DHB). This is Multicopper oxidase CueO from Escherichia coli (strain K12).